We begin with the raw amino-acid sequence, 190 residues long: HTH-type transcriptional repressor CutR (190 aa).

Residues 3 to 58 (PINRQQHILKWLKEEGSLRISDISARFGVSEMTVYRDVNQLVQSNQVIKTAGGITL) enclose the HTH deoR-type domain. The H-T-H motif DNA-binding region spans 20–39 (LRISDISARFGVSEMTVYRD).

The protein resides in the cytoplasm. In terms of biological role, may act as a negative transcriptional regulator of cutJ/ycnJ in the presence of copper. May use copper as a corepressor. The sequence is that of HTH-type transcriptional repressor CutR from Bacillus subtilis (strain 168).